Consider the following 571-residue polypeptide: Proline--tRNA ligase (571 aa).

It belongs to the class-II aminoacyl-tRNA synthetase family. ProS type 1 subfamily. As to quaternary structure, homodimer.

It is found in the cytoplasm. It carries out the reaction tRNA(Pro) + L-proline + ATP = L-prolyl-tRNA(Pro) + AMP + diphosphate. In terms of biological role, catalyzes the attachment of proline to tRNA(Pro) in a two-step reaction: proline is first activated by ATP to form Pro-AMP and then transferred to the acceptor end of tRNA(Pro). As ProRS can inadvertently accommodate and process non-cognate amino acids such as alanine and cysteine, to avoid such errors it has two additional distinct editing activities against alanine. One activity is designated as 'pretransfer' editing and involves the tRNA(Pro)-independent hydrolysis of activated Ala-AMP. The other activity is designated 'posttransfer' editing and involves deacylation of mischarged Ala-tRNA(Pro). The misacylated Cys-tRNA(Pro) is not edited by ProRS. The protein is Proline--tRNA ligase of Actinobacillus succinogenes (strain ATCC 55618 / DSM 22257 / CCUG 43843 / 130Z).